A 391-amino-acid polypeptide reads, in one-letter code: Metal tolerance protein 7 (391 aa).

Positions 1 to 21 (MGSRGRRGGGERETETEEDET) are disordered. Topologically, residues 1–103 (MGSRGRRGGG…LRQMAKGERL (103 aa)) are cytoplasmic. The helical transmembrane segment at 104 to 124 (AINLSNIINLILFIGKVLASV) threads the bilayer. The Vacuolar portion of the chain corresponds to 125–134 (ESLSMAVIAS). The chain crosses the membrane as a helical span at residues 135 to 155 (TLDSLLDLLSGFILWFTAHAM). The Cytoplasmic segment spans residues 156-171 (KKPNKYSYPIGKRRMQ). The chain crosses the membrane as a helical span at residues 172–192 (PVGIIVFASVMGTLGFQVLIE). Residues 193–210 (SGRQLITNEHQVFDHRKE) are Vacuolar-facing. A helical transmembrane segment spans residues 211 to 231 (LWMIGSMSSVAVVKFFLMLYC). Residues 232-246 (RSFKNEIVRAYAQDH) are Cytoplasmic-facing. Residues 247–264 (FFDVITNSVGLVSALLAV) form a helical membrane-spanning segment. At 265–266 (RY) the chain is on the vacuolar side. Residues 267–287 (KWWMDPVGAILIAVYTITTWA) traverse the membrane as a helical segment. Over 288–391 (RTVVENVGTL…THRPEHKAEV (104 aa)) the chain is Cytoplasmic.

The protein belongs to the cation diffusion facilitator (CDF) transporter (TC 2.A.4) family. SLC30A subfamily.

It localises to the vacuole membrane. In terms of biological role, involved in sequestration of excess metal in the cytoplasm into vacuoles to maintain metal homeostasis. The chain is Metal tolerance protein 7 (MTP7) from Oryza sativa subsp. japonica (Rice).